The primary structure comprises 291 residues: ADP-dependent (S)-NAD(P)H-hydrate dehydratase (291 aa).

In terms of domain architecture, YjeF C-terminal spans Ser-5–Tyr-273. (6S)-NADPHX-binding residues include Ala-40, Gly-103, and His-153. Gly-215 contacts AMP. Asp-216 lines the (6S)-NADPHX pocket.

It belongs to the NnrD/CARKD family. In terms of assembly, homotetramer. Mg(2+) serves as cofactor.

It catalyses the reaction (6S)-NADHX + ADP = AMP + phosphate + NADH + H(+). It carries out the reaction (6S)-NADPHX + ADP = AMP + phosphate + NADPH + H(+). Its function is as follows. Catalyzes the dehydration of the S-form of NAD(P)HX at the expense of ADP, which is converted to AMP. Together with NAD(P)HX epimerase, which catalyzes the epimerization of the S- and R-forms, the enzyme allows the repair of both epimers of NAD(P)HX, a damaged form of NAD(P)H that is a result of enzymatic or heat-dependent hydration. The polypeptide is ADP-dependent (S)-NAD(P)H-hydrate dehydratase (Enterococcus faecalis (strain ATCC 700802 / V583)).